Consider the following 233-residue polypeptide: Leucyl/phenylalanyl-tRNA--protein transferase (233 aa).

Belongs to the L/F-transferase family.

The protein resides in the cytoplasm. It catalyses the reaction N-terminal L-lysyl-[protein] + L-leucyl-tRNA(Leu) = N-terminal L-leucyl-L-lysyl-[protein] + tRNA(Leu) + H(+). The enzyme catalyses N-terminal L-arginyl-[protein] + L-leucyl-tRNA(Leu) = N-terminal L-leucyl-L-arginyl-[protein] + tRNA(Leu) + H(+). The catalysed reaction is L-phenylalanyl-tRNA(Phe) + an N-terminal L-alpha-aminoacyl-[protein] = an N-terminal L-phenylalanyl-L-alpha-aminoacyl-[protein] + tRNA(Phe). In terms of biological role, functions in the N-end rule pathway of protein degradation where it conjugates Leu, Phe and, less efficiently, Met from aminoacyl-tRNAs to the N-termini of proteins containing an N-terminal arginine or lysine. The polypeptide is Leucyl/phenylalanyl-tRNA--protein transferase (Shewanella denitrificans (strain OS217 / ATCC BAA-1090 / DSM 15013)).